A 465-amino-acid polypeptide reads, in one-letter code: ATP synthase subunit beta (465 aa).

152–159 (GGAGVGKT) lines the ATP pocket.

It belongs to the ATPase alpha/beta chains family. F-type ATPases have 2 components, CF(1) - the catalytic core - and CF(0) - the membrane proton channel. CF(1) has five subunits: alpha(3), beta(3), gamma(1), delta(1), epsilon(1). CF(0) has three main subunits: a(1), b(2) and c(9-12). The alpha and beta chains form an alternating ring which encloses part of the gamma chain. CF(1) is attached to CF(0) by a central stalk formed by the gamma and epsilon chains, while a peripheral stalk is formed by the delta and b chains.

The protein localises to the cell membrane. It carries out the reaction ATP + H2O + 4 H(+)(in) = ADP + phosphate + 5 H(+)(out). In terms of biological role, produces ATP from ADP in the presence of a proton gradient across the membrane. The catalytic sites are hosted primarily by the beta subunits. The protein is ATP synthase subunit beta of Desulfitobacterium hafniense (strain Y51).